Reading from the N-terminus, the 132-residue chain is Small ribosomal subunit protein uS8 (132 aa).

It belongs to the universal ribosomal protein uS8 family. In terms of assembly, part of the 30S ribosomal subunit. Contacts proteins S5 and S12.

Its function is as follows. One of the primary rRNA binding proteins, it binds directly to 16S rRNA central domain where it helps coordinate assembly of the platform of the 30S subunit. This chain is Small ribosomal subunit protein uS8, found in Borreliella afzelii (strain PKo) (Borrelia afzelii).